The primary structure comprises 75 residues: Acylphosphatase-like protein MJ1405 (75 aa).

The region spanning 8-75 (TYEIIIYGRI…TNFWRVRKCK (68 aa)) is the Acylphosphatase-like domain.

The sequence is that of Acylphosphatase-like protein MJ1405 from Methanocaldococcus jannaschii (strain ATCC 43067 / DSM 2661 / JAL-1 / JCM 10045 / NBRC 100440) (Methanococcus jannaschii).